A 409-amino-acid polypeptide reads, in one-letter code: 5-aminolevulinate synthase (409 aa).

Substrate-binding residues include Arg-21, Ser-137, and Lys-156. Positions 189, 217, and 245 each coordinate pyridoxal 5'-phosphate. Lys-248 is an active-site residue. An N6-(pyridoxal phosphate)lysine modification is found at Lys-248. Thr-277 and Thr-278 together coordinate pyridoxal 5'-phosphate. Residue Thr-365 participates in substrate binding.

This sequence belongs to the class-II pyridoxal-phosphate-dependent aminotransferase family. In terms of assembly, homodimer. Pyridoxal 5'-phosphate serves as cofactor.

It carries out the reaction succinyl-CoA + glycine + H(+) = 5-aminolevulinate + CO2 + CoA. Its pathway is porphyrin-containing compound metabolism; protoporphyrin-IX biosynthesis; 5-aminolevulinate from glycine: step 1/1. This is 5-aminolevulinate synthase (hemA) from Paracoccus denitrificans (strain Pd 1222).